A 155-amino-acid chain; its full sequence is Small ribosomal subunit protein uS7c (155 aa).

Belongs to the universal ribosomal protein uS7 family. Part of the 30S ribosomal subunit.

The protein resides in the plastid. It localises to the chloroplast. Its function is as follows. One of the primary rRNA binding proteins, it binds directly to 16S rRNA where it nucleates assembly of the head domain of the 30S subunit. This Saururus cernuus (Lizard's tail) protein is Small ribosomal subunit protein uS7c (rps7).